Here is a 628-residue protein sequence, read N- to C-terminus: Chaperone protein HtpG (628 aa).

The segment at 1 to 333 is a; substrate-binding; that stretch reads MTTDTKATET…SADLPLNVSR (333 aa). Residues 334-549 are b; that stretch reads EMIQESPLLA…EHGPDRQFER (216 aa). Residues 550-628 are c; that stretch reads LMNAAGRLDK…RLIARGIAKG (79 aa).

This sequence belongs to the heat shock protein 90 family. In terms of assembly, homodimer.

It localises to the cytoplasm. Its function is as follows. Molecular chaperone. Has ATPase activity. This is Chaperone protein HtpG from Mesorhizobium japonicum (strain LMG 29417 / CECT 9101 / MAFF 303099) (Mesorhizobium loti (strain MAFF 303099)).